The sequence spans 187 residues: Large ribosomal subunit protein uL6 (187 aa).

The protein belongs to the universal ribosomal protein uL6 family. As to quaternary structure, part of the 50S ribosomal subunit.

Functionally, this protein binds to the 23S rRNA, and is important in its secondary structure. It is located near the subunit interface in the base of the L7/L12 stalk, and near the tRNA binding site of the peptidyltransferase center. In Roseiflexus castenholzii (strain DSM 13941 / HLO8), this protein is Large ribosomal subunit protein uL6.